We begin with the raw amino-acid sequence, 494 residues long: DBIRD complex subunit ZNF326 (494 aa).

Disordered stretches follow at residues 1 to 22 (MDRE…QSFS), 147 to 170 (AFGG…RGQM), and 202 to 264 (KMAP…NSEK). The span at 7-22 (SYNQRSVNSYGNQSFS) shows a compositional bias: polar residues. Residues 200–221 (KRKMAPPFKPVGFFGKKQKLSK) carry the Bipartite nuclear localization signal motif. C2H2 AKAP95-type zinc fingers lie at residues 273 to 295 (CSFC…SATH) and 365 to 388 (CSAC…SADH). Residues 429–494 (PFETQPDEQQ…CDPLTTTDEV (66 aa)) are disordered. Residues 433–451 (QPDEQQQEQEEEEEEEEQQ) show a composition bias toward acidic residues.

It belongs to the AKAP95 family. In terms of assembly, component of the DBIRD complex.

The protein resides in the nucleus. In terms of biological role, core component of the DBIRD complex, a multiprotein complex that acts at the interface between core mRNP particles and RNA polymerase II (RNAPII) and integrates transcript elongation with the regulation of alternative splicing. The sequence is that of DBIRD complex subunit ZNF326 (znf326) from Xenopus laevis (African clawed frog).